A 180-amino-acid chain; its full sequence is Inner membrane-spanning protein YciB (180 aa).

The next 5 membrane-spanning stretches (helical) occupy residues 25 to 45 (QNAT…CYFV), 54 to 74 (IISV…GNSI), 76 to 96 (IKIK…MSGI), 118 to 138 (ITLS…NEIV), and 150 to 170 (FKVF…LPLL).

This sequence belongs to the YciB family.

It localises to the cell inner membrane. In terms of biological role, plays a role in cell envelope biogenesis, maintenance of cell envelope integrity and membrane homeostasis. The protein is Inner membrane-spanning protein YciB of Rickettsia canadensis (strain McKiel).